We begin with the raw amino-acid sequence, 485 residues long: Adenosylhomocysteinase (485 aa).

Residues Thr-64, Asp-139, and Glu-205 each contribute to the substrate site. 206–208 serves as a coordination point for NAD(+); sequence TTT. Positions 235 and 239 each coordinate substrate. NAD(+) is bound by residues Asn-240, 269–274, Glu-292, Asn-327, 348–350, and Asn-397; these read GYGDVG and IGH.

This sequence belongs to the adenosylhomocysteinase family. The cofactor is NAD(+).

The enzyme catalyses S-adenosyl-L-homocysteine + H2O = L-homocysteine + adenosine. Its pathway is amino-acid biosynthesis; L-homocysteine biosynthesis; L-homocysteine from S-adenosyl-L-homocysteine: step 1/1. Functionally, adenosylhomocysteine is a competitive inhibitor of S-adenosyl-L-methionine-dependent methyl transferase reactions; therefore adenosylhomocysteinase may play a key role in the control of methylations via regulation of the intracellular concentration of adenosylhomocysteine. This Medicago sativa (Alfalfa) protein is Adenosylhomocysteinase (SAHH).